Here is an 84-residue protein sequence, read N- to C-terminus: Acetylcholine receptor subunit alpha (84 aa).

2 cysteine pairs are disulfide-bonded: Cys-7–Cys-21 and Cys-71–Cys-72. N-linked (GlcNAc...) asparagine glycosylation occurs at Asn-20.

It belongs to the ligand-gated ion channel (TC 1.A.9) family. Acetylcholine receptor (TC 1.A.9.1) subfamily. Alpha-1/CHRNA1 sub-subfamily. In terms of assembly, one of the alpha chains that assemble within the acetylcholine receptor, a pentamer of two alpha chains, a beta, a delta, and a gamma (in immature muscle) or epsilon (in mature muscle) chains. The muscle heteropentamer composed of alpha-1, beta-1, delta, epsilon subunits interacts with the alpha-conotoxin ImII.

Its subcellular location is the postsynaptic cell membrane. It localises to the cell membrane. It carries out the reaction K(+)(in) = K(+)(out). It catalyses the reaction Na(+)(in) = Na(+)(out). Functionally, upon acetylcholine binding, the AChR responds by an extensive change in conformation that affects all subunits and leads to opening of an ion-conducting channel across the plasma membrane. This chain is Acetylcholine receptor subunit alpha (CHRNA1), found in Felis catus (Cat).